Reading from the N-terminus, the 385-residue chain is Multicilin (385 aa).

The tract at residues 1-130 (MQACGGGAAG…TVDDLISDSS (130 aa)) is necessary and sufficient for its degradation during the cell cycle. The interval 86-111 (SSLLGSDAPPGGDLAASQNHSHQTEA) is disordered. Residues 131–385 (SMMSPTLASG…GGYKFRWVPS (255 aa)) are necessary and sufficient for proper nuclear localization. The interval 173 to 245 (PDVPPPEQYW…SVLDKLMITQ (73 aa)) is necessary and sufficient for interaction with GMNN and sufficient for homodimerization. Positions 179-227 (EQYWKEVADQNQRALGDALVENNQLHVTLTQKQEEIASLKERNVQLKEL) form a coiled coil. Residues 294 to 319 (ALQSRDPKRPRLLPEPANTDTRPGNL) are disordered.

It belongs to the geminin family. Heterodimer (via coiled-coil domain) with GMNN (via coiled-coil domain); targets GMNN to the nucleus. Can form homodimers (in vitro, via coiled-coil domain), but these are much less stable than the heterodimer formed with GMNN.

It localises to the nucleus. Its function is as follows. Transcription regulator specifically required for multiciliate cell differentiation. Acts in a multiprotein complex containing E2F4 and E2F5 that binds and activates genes required for centriole biogenesis. Required for the deuterosome-mediated acentriolar pathway. Plays a role in mitotic cell cycle progression by promoting cell cycle exit. Modulates GMNN activity by reducing its affinity for CDT1. This chain is Multicilin, found in Homo sapiens (Human).